The sequence spans 345 residues: Acetylserotonin O-methyltransferase (345 aa).

Residues Tyr147, Trp164, Asp210, Gly235–Phe237, and Arg252 contribute to the S-adenosyl-L-methionine site. Catalysis depends on His255, which acts as the Proton donor/acceptor. Substrate-binding residues include Asp256, Asn302, and Gln306.

It belongs to the class I-like SAM-binding methyltransferase superfamily. Cation-independent O-methyltransferase family. Homodimer. As to expression, highly expressed in pineal gland. In the retina, 10- to 100-fold lower expression compared to pineal gland, if any.

It catalyses the reaction N-acetylserotonin + S-adenosyl-L-methionine = melatonin + S-adenosyl-L-homocysteine + H(+). Its pathway is aromatic compound metabolism; melatonin biosynthesis; melatonin from serotonin: step 1/2. Its function is as follows. Catalyzes the transfer of a methyl group onto N-acetylserotonin, producing melatonin (N-acetyl-5-methoxytryptamine). The chain is Acetylserotonin O-methyltransferase (ASMT) from Macaca mulatta (Rhesus macaque).